The following is a 165-amino-acid chain: uncharacterized protein (165 aa).

This is an uncharacterized protein from Invertebrate iridescent virus 6 (IIV-6).